The following is a 339-amino-acid chain: Small ribosomal subunit protein uS3m (339 aa).

It belongs to the universal ribosomal protein uS3 family.

It is found in the mitochondrion. Functionally, essential for mitochondrial protein synthesis and required for the maturation of small ribosomal subunits. The sequence is that of Small ribosomal subunit protein uS3m (VAR1) from Candida glabrata (strain ATCC 2001 / BCRC 20586 / JCM 3761 / NBRC 0622 / NRRL Y-65 / CBS 138) (Yeast).